Consider the following 337-residue polypeptide: DNA-directed RNA polymerase subunit alpha (337 aa).

The segment at 1 to 233 is alpha N-terminal domain (alpha-NTD); sequence MVREEVAGST…DLFLPFLHTE (233 aa). The alpha C-terminal domain (alpha-CTD) stretch occupies residues 267–337; it reads IPLNCIFIDQ…LPMDLPKNKF (71 aa).

It belongs to the RNA polymerase alpha chain family. In plastids the minimal PEP RNA polymerase catalytic core is composed of four subunits: alpha, beta, beta', and beta''. When a (nuclear-encoded) sigma factor is associated with the core the holoenzyme is formed, which can initiate transcription.

The protein resides in the plastid. It localises to the chloroplast. It catalyses the reaction RNA(n) + a ribonucleoside 5'-triphosphate = RNA(n+1) + diphosphate. DNA-dependent RNA polymerase catalyzes the transcription of DNA into RNA using the four ribonucleoside triphosphates as substrates. This chain is DNA-directed RNA polymerase subunit alpha, found in Oryza nivara (Indian wild rice).